Consider the following 113-residue polypeptide: UPF0482 protein YnfB (113 aa).

The first 28 residues, 1–28 (MNNTLSKRLCLTAMLTLAAVVYTTSAFA), serve as a signal peptide directing secretion.

This sequence belongs to the UPF0482 family.

In Salmonella agona (strain SL483), this protein is UPF0482 protein YnfB.